A 124-amino-acid chain; its full sequence is MARILGIDIPNQKRIEIALTYIFGIGLSSAKTILKKAKINPDKRVKDLSEEELVAIRNAASGYKIEGDLRREIALNIKHLTEIGSWKGIRHRKNLPVRGQRTRTNARTRKGPRKTVANKKIESK.

A compositionally biased stretch (basic residues) spans Lys93–Ala117. A disordered region spans residues Lys93–Lys124.

Belongs to the universal ribosomal protein uS13 family. In terms of assembly, part of the 30S ribosomal subunit. Forms a loose heterodimer with protein S19. Forms two bridges to the 50S subunit in the 70S ribosome.

Located at the top of the head of the 30S subunit, it contacts several helices of the 16S rRNA. In the 70S ribosome it contacts the 23S rRNA (bridge B1a) and protein L5 of the 50S subunit (bridge B1b), connecting the 2 subunits; these bridges are implicated in subunit movement. Contacts the tRNAs in the A and P-sites. This Mycoplasma genitalium (strain ATCC 33530 / DSM 19775 / NCTC 10195 / G37) (Mycoplasmoides genitalium) protein is Small ribosomal subunit protein uS13.